We begin with the raw amino-acid sequence, 201 residues long: Putative ankyrin repeat protein R868 (201 aa).

ANK repeat units lie at residues 125–154 (YENN…NCYF) and 156–188 (KAKK…DYNF).

This Acanthamoeba polyphaga (Amoeba) protein is Putative ankyrin repeat protein R868.